A 508-amino-acid chain; its full sequence is MGTRFQSFLLVFLLSCLILISTASCERNGDGTIRIGLKKRKLDRSNRLASQLFLKNRGSHWSPKHYFRLNDENADMVPLKNYLDAQYYGDITIGTPPQKFTVIFDTGSSNLWIPSTKCYLSVACYFHSKYKASQSSSYRKNGKPASIRYGTGAISGYFSNDDVKVGDIVVKEQEFIEATSEPGITFLLAKFDGILGLGFKEISVGNSTPVWYNMVEKGLVKEPIFSFWLNRNPKDPEGGEIVFGGVDPKHFKGEHTFVPVTHKGYWQFDMGDLQIAGKPTGYCAKGCSAIADSGTSLLTGPSTVITMINHAIGAQGIVSRECKAVVDQYGKTMLNSLLAQEDPKKVCSQIGVCAYDGTQSVSMGIQSVVDDGTSGLLNQAMCSACEMAAVWMESELTQNQTQERILAYAAELCDHIPTQNQQSAVDCGRVSSMPIVTFSIGGRSFDLTPQDYIFKIGEGVESQCTSGFTAMDIAPPRGPLWILGDIFMGPYHTVFDYGKGRVGFAKAA.

Residues 1-25 form the signal peptide; that stretch reads MGTRFQSFLLVFLLSCLILISTASC. A propeptide spans 26–69 (activation peptide); the sequence is ERNGDGTIRIGLKKRKLDRSNRLASQLFLKNRGSHWSPKHYFRL. Positions 87-505 constitute a Peptidase A1 domain; that stretch reads YYGDITIGTP…DYGKGRVGFA (419 aa). Residue Asp105 is part of the active site. Cystine bridges form between Cys118–Cys124 and Cys283–Cys287. The active site involves Asp292. In terms of domain architecture, Saposin B-type spans 317–419; sequence IVSRECKAVV…AELCDHIPTQ (103 aa). 4 disulfide bridges follow: Cys322–Cys413, Cys347–Cys385, Cys353–Cys382, and Cys427–Cys464. Asn399 carries an N-linked (GlcNAc...) asparagine glycan.

This sequence belongs to the peptidase A1 family. As to expression, expressed in petals, carpels and seed pods.

The protein resides in the secreted. Functionally, involved in the processing and degradation of storage proteins. The sequence is that of Aspartic proteinase A3 (APA3) from Arabidopsis thaliana (Mouse-ear cress).